Reading from the N-terminus, the 140-residue chain is uncharacterized protein (140 aa).

This is an uncharacterized protein from Neurospora crassa (strain ATCC 24698 / 74-OR23-1A / CBS 708.71 / DSM 1257 / FGSC 987).